We begin with the raw amino-acid sequence, 284 residues long: Bifunctional protein FolD 1 (284 aa).

NADP(+)-binding positions include 166 to 168 (GAS), Ser-191, and Ile-232.

Belongs to the tetrahydrofolate dehydrogenase/cyclohydrolase family. As to quaternary structure, homodimer.

It catalyses the reaction (6R)-5,10-methylene-5,6,7,8-tetrahydrofolate + NADP(+) = (6R)-5,10-methenyltetrahydrofolate + NADPH. The enzyme catalyses (6R)-5,10-methenyltetrahydrofolate + H2O = (6R)-10-formyltetrahydrofolate + H(+). Its pathway is one-carbon metabolism; tetrahydrofolate interconversion. In terms of biological role, catalyzes the oxidation of 5,10-methylenetetrahydrofolate to 5,10-methenyltetrahydrofolate and then the hydrolysis of 5,10-methenyltetrahydrofolate to 10-formyltetrahydrofolate. The polypeptide is Bifunctional protein FolD 1 (Hydrogenovibrio crunogenus (strain DSM 25203 / XCL-2) (Thiomicrospira crunogena)).